The primary structure comprises 639 residues: Polyphenol oxidase, chloroplastic (639 aa).

A chloroplast-targeting transit peptide spans 1–101; sequence MATLSSPTII…EGANYYNTLA (101 aa). The tract at residues 35–58 is disordered; it reads GVRSVNGKVSCQTKNNNGNDENNQ. 2 disulfide bridges follow: C111/C127 and C126/C194. Residues H193, H214, H223, H354, H358, and H388 each coordinate Cu cation. Residues 197 to 214 constitute a cross-link (2'-(S-cysteinyl)-histidine (Cys-His)); it reads CDGSYPVLGHNDTRLEVH.

It belongs to the tyrosinase family. The cofactor is Cu(2+).

It localises to the plastid. Its subcellular location is the chloroplast thylakoid lumen. It carries out the reaction 2 catechol + O2 = 2 1,2-benzoquinone + 2 H2O. Functionally, catalyzes the oxidation of mono- and o-diphenols to o-diquinones. The chain is Polyphenol oxidase, chloroplastic from Spinacia oleracea (Spinach).